An 829-amino-acid polypeptide reads, in one-letter code: uncharacterized protein (829 aa).

The protein belongs to the IIV-6 050L family.

This is an uncharacterized protein from Invertebrate iridescent virus 3 (IIV-3).